The sequence spans 179 residues: Large ribosomal subunit protein uL5 (179 aa).

Belongs to the universal ribosomal protein uL5 family. In terms of assembly, part of the 50S ribosomal subunit; part of the 5S rRNA/L5/L18/L25 subcomplex. Contacts the 5S rRNA and the P site tRNA. Forms a bridge to the 30S subunit in the 70S ribosome.

In terms of biological role, this is one of the proteins that bind and probably mediate the attachment of the 5S RNA into the large ribosomal subunit, where it forms part of the central protuberance. In the 70S ribosome it contacts protein S13 of the 30S subunit (bridge B1b), connecting the 2 subunits; this bridge is implicated in subunit movement. Contacts the P site tRNA; the 5S rRNA and some of its associated proteins might help stabilize positioning of ribosome-bound tRNAs. The polypeptide is Large ribosomal subunit protein uL5 (Vibrio vulnificus (strain CMCP6)).